We begin with the raw amino-acid sequence, 320 residues long: Cytochrome f (320 aa).

The first 35 residues, 1-35 (MQTRNAFSYIKEEITRSISVLLVIYIIIRAPISNA), serve as a signal peptide directing secretion. Residues Y36, C56, C59, and H60 each coordinate heme. Residues 286-305 (VQGLLFFLASIIFAQIFLVL) form a helical membrane-spanning segment.

The protein belongs to the cytochrome f family. The 4 large subunits of the cytochrome b6-f complex are cytochrome b6, subunit IV (17 kDa polypeptide, petD), cytochrome f and the Rieske protein, while the 4 small subunits are PetG, PetL, PetM and PetN. The complex functions as a dimer. Heme is required as a cofactor.

Its subcellular location is the plastid. It is found in the chloroplast thylakoid membrane. Its function is as follows. Component of the cytochrome b6-f complex, which mediates electron transfer between photosystem II (PSII) and photosystem I (PSI), cyclic electron flow around PSI, and state transitions. The polypeptide is Cytochrome f (Lotus japonicus (Lotus corniculatus var. japonicus)).